The sequence spans 81 residues: CLAVATA3/ESR (CLE)-related protein 12 (81 aa).

Positions 1 to 31 (MENSNKVPISKIGLIMLMIFSTFFMSPHARR) are cleaved as a signal peptide. The segment covering 55 to 67 (KRSRTDLEDKAVP) has biased composition (basic and acidic residues). Positions 55–81 (KRSRTDLEDKAVPGDRLSPGGPNHIHN) are disordered. Hydroxyproline is present on residues Pro73 and Pro76. An O-linked (Ara...) hydroxyproline glycan is attached at Pro76.

The protein belongs to the CLV3/ESR signal peptide family. In terms of processing, the O-glycosylation (arabinosylation) of the hydroxyproline Pro-76 enhances binding affinity of the CLE12p peptide for its receptor. As to expression, expressed in young nodules throughout the central tissue. Expressed in the apical region of elongated nodules, corresponding to the meristematic and early infection zones.

Its subcellular location is the secreted. The protein localises to the extracellular space. Its function is as follows. Signaling peptide involved in the regulation of nodulation. Moves from root to shoot to function with the receptor kinase SUNN, in a signaling pathway that plays roles during cellular differentiation, both at the onset of nodulation, and later during nodule meristem development and subsequent homeostasis. Interacts with SUNN signaling to control nodule numbers. SUNN is involved in the autoregulation of nodulation (AON), a long distance systemic signaling from root to shoot and back again, which allows legumes to limit the number of root nodules formed based on available nitrogen and previous rhizobial colonization. The protein is CLAVATA3/ESR (CLE)-related protein 12 of Medicago truncatula (Barrel medic).